We begin with the raw amino-acid sequence, 405 residues long: Phosphopentomutase (405 aa).

Mn(2+) is bound by residues aspartate 10, aspartate 297, histidine 302, aspartate 338, histidine 339, and histidine 350.

It belongs to the phosphopentomutase family. Mn(2+) serves as cofactor.

Its subcellular location is the cytoplasm. It carries out the reaction 2-deoxy-alpha-D-ribose 1-phosphate = 2-deoxy-D-ribose 5-phosphate. It catalyses the reaction alpha-D-ribose 1-phosphate = D-ribose 5-phosphate. The protein operates within carbohydrate degradation; 2-deoxy-D-ribose 1-phosphate degradation; D-glyceraldehyde 3-phosphate and acetaldehyde from 2-deoxy-alpha-D-ribose 1-phosphate: step 1/2. Functionally, isomerase that catalyzes the conversion of deoxy-ribose 1-phosphate (dRib-1-P) and ribose 1-phosphate (Rib-1-P) to deoxy-ribose 5-phosphate (dRib-5-P) and ribose 5-phosphate (Rib-5-P), respectively. The sequence is that of Phosphopentomutase from Pseudoalteromonas translucida (strain TAC 125).